A 165-amino-acid chain; its full sequence is Large ribosomal subunit protein uL10 (165 aa).

This sequence belongs to the universal ribosomal protein uL10 family. Part of the ribosomal stalk of the 50S ribosomal subunit. The N-terminus interacts with L11 and the large rRNA to form the base of the stalk. The C-terminus forms an elongated spine to which L12 dimers bind in a sequential fashion forming a multimeric L10(L12)X complex.

Its function is as follows. Forms part of the ribosomal stalk, playing a central role in the interaction of the ribosome with GTP-bound translation factors. The chain is Large ribosomal subunit protein uL10 from Mycoplasma mycoides subsp. mycoides SC (strain CCUG 32753 / NCTC 10114 / PG1).